A 266-amino-acid polypeptide reads, in one-letter code: Translation initiation factor 2 subunit alpha (266 aa).

Positions 12 to 83 constitute an S1 motif domain; sequence GEILIATVKQ…RKGTVDVSLK (72 aa).

The protein belongs to the eIF-2-alpha family. In terms of assembly, heterotrimer composed of an alpha, a beta and a gamma chain.

EIF-2 functions in the early steps of protein synthesis by forming a ternary complex with GTP and initiator tRNA. The protein is Translation initiation factor 2 subunit alpha of Saccharolobus islandicus (strain M.16.27) (Sulfolobus islandicus).